We begin with the raw amino-acid sequence, 103 residues long: Large ribosomal subunit protein bL21 (103 aa).

Belongs to the bacterial ribosomal protein bL21 family. As to quaternary structure, part of the 50S ribosomal subunit. Contacts protein L20.

In terms of biological role, this protein binds to 23S rRNA in the presence of protein L20. The sequence is that of Large ribosomal subunit protein bL21 from Shewanella pealeana (strain ATCC 700345 / ANG-SQ1).